The chain runs to 520 residues: Maturase K (520 aa).

The protein belongs to the intron maturase 2 family. MatK subfamily.

It is found in the plastid. The protein resides in the chloroplast. Its function is as follows. Usually encoded in the trnK tRNA gene intron. Probably assists in splicing its own and other chloroplast group II introns. In Ruscus aculeatus (Butcher's broom), this protein is Maturase K.